An 84-amino-acid polypeptide reads, in one-letter code: Large ribosomal subunit protein bL31 (84 aa).

Disordered regions lie at residues 1–41 (MQHD…DSTN) and 63–84 (RRYG…AADE). Over residues 21 to 30 (EITTRSTMET) the composition is skewed to polar residues. A compositionally biased stretch (acidic residues) spans 68–84 (TDDDEGDDEETEDAADE).

The protein belongs to the bacterial ribosomal protein bL31 family. Type A subfamily. Part of the 50S ribosomal subunit.

Binds the 23S rRNA. In Salinibacter ruber (strain DSM 13855 / M31), this protein is Large ribosomal subunit protein bL31.